The following is a 1057-amino-acid chain: Diacylglycerol kinase iota (1057 aa).

Over residues 15–59 (AARGPARAPAAAAAAAASPPGPCSGAACAPSAAAGAGAMNPSSSA) the composition is skewed to low complexity. Disordered regions lie at residues 15–74 (AARG…SSGS) and 334–358 (LKAS…MEQE). A compositionally biased stretch (basic residues) spans 337–352 (SNRKKKRTSFKRKASK). Residues 372 to 507 (PLMKPLLVFV…DRWNLHVERN (136 aa)) form the DAGKc domain. ANK repeat units follow at residues 950–979 (DHCS…SELL) and 986–1015 (TGET…SLRK). Positions 1014–1024 (RKTDSKGKTPQ) are enriched in basic and acidic residues. The segment at 1014–1033 (RKTDSKGKTPQERAQQAGDP) is disordered. The PDZ-binding signature appears at 1055-1057 (TAV).

This sequence belongs to the eukaryotic diacylglycerol kinase family. In terms of assembly, interacts (via PDZ-binding motif) with DLG4; controls the localization of DGKI to the synapse. Interacts (via PDZ-binding motif) with DLG1. Interacts (via PDZ-binding motif) with DLG2. Interacts (via PDZ-binding motif) with DLG3. May interact with RASGRP3; involved in the regulation of RASGRP3 activity. As to expression, specifically expressed in brain and retina. In brain, highly expressed in hippocampus, caudate nucleus, occipital pole, cerebral cortex, and cerebellum. Also detected in kidney.

Its subcellular location is the cell projection. The protein resides in the axon. The protein localises to the dendrite. It localises to the presynapse. It is found in the postsynapse. Its subcellular location is the postsynaptic density. The protein resides in the synaptic cell membrane. The protein localises to the cytoplasmic vesicle. It localises to the secretory vesicle. It is found in the synaptic vesicle membrane. Its subcellular location is the cytoplasm. The protein resides in the cytosol. The protein localises to the nucleus. It carries out the reaction a 1,2-diacyl-sn-glycerol + ATP = a 1,2-diacyl-sn-glycero-3-phosphate + ADP + H(+). It catalyses the reaction 1,2-di-(9Z-octadecenoyl)-sn-glycerol + ATP = 1,2-di-(9Z-octadecenoyl)-sn-glycero-3-phosphate + ADP + H(+). The catalysed reaction is 1-octadecanoyl-2-(5Z,8Z,11Z,14Z-eicosatetraenoyl)-sn-glycerol + ATP = 1-octadecanoyl-2-(5Z,8Z,11Z,14Z-eicosatetraenoyl)-sn-glycero-3-phosphate + ADP + H(+). The enzyme catalyses 1-octadecanoyl-2-(9Z,12Z)-octadecadienoyl-sn-glycerol + ATP = 1-octadecanoyl-2-(9Z,12Z-octadecadienoyl)-sn-glycero-3-phosphate + ADP + H(+). It participates in lipid metabolism; glycerolipid metabolism. In terms of biological role, diacylglycerol kinase that converts diacylglycerol/DAG into phosphatidic acid/phosphatidate/PA and regulates the respective levels of these two bioactive lipids. Thereby, acts as a central switch between the signaling pathways activated by these second messengers with different cellular targets and opposite effects in numerous biological processes. Has probably no preference for any of the diacylglycerols in terms of the acyl chain composition, especially for the acyl chain at the sn-2 position. By controlling the diacylglycerol/DAG-mediated activation of RASGRP3, negatively regulates the Rap1 signaling pathway. May play a role in presynaptic diacylglycerol/DAG signaling and control neurotransmitter release during metabotropic glutamate receptor-dependent long-term depression. The chain is Diacylglycerol kinase iota from Homo sapiens (Human).